Consider the following 440-residue polypeptide: COP9 signalosome complex subunit 5 (440 aa).

The MPN domain maps to 71 to 218 (VLISKLSCEK…MGAFRTIESK (148 aa)). Residues H164, H166, and D177 each coordinate Zn(2+). The short motif at 164 to 177 (HSHPGYDCWLSNID) is the JAMM motif element. Positions 319–341 (TQRGDSTETSSFGSMFSGDNTSD) are enriched in polar residues. Disordered regions lie at residues 319-343 (TQRG…SDVD) and 375-399 (SSRS…CHDE).

The protein belongs to the peptidase M67A family. CSN5 subfamily. In terms of assembly, component of a COP9 signalosome-like (CSN) complex, composed of at least RRI1/CSN5, CSN9, RRI2/CSN10, PCI8/CSN11, CSN12 and CSI1. Within this complex it probably interacts directly with CSN12. Also interacts with RPN5. A divalent metal cation is required as a cofactor.

It is found in the cytoplasm. The protein resides in the nucleus. In terms of biological role, catalytic component of the COP9 signalosome (CSN) complex that acts as an regulator of the ubiquitin (Ubl) conjugation pathway by mediating the deneddylation of the cullin subunit of SCF-type E3 ubiquitin-protein ligase complexes. The CSN complex is involved in the regulation of the mating pheromone response. This chain is COP9 signalosome complex subunit 5 (RRI1), found in Saccharomyces cerevisiae (strain ATCC 204508 / S288c) (Baker's yeast).